We begin with the raw amino-acid sequence, 269 residues long: Ribosomal RNA small subunit methyltransferase A (269 aa).

N20, L22, G47, E68, D90, and N110 together coordinate S-adenosyl-L-methionine.

Belongs to the class I-like SAM-binding methyltransferase superfamily. rRNA adenine N(6)-methyltransferase family. RsmA subfamily.

Its subcellular location is the cytoplasm. It carries out the reaction adenosine(1518)/adenosine(1519) in 16S rRNA + 4 S-adenosyl-L-methionine = N(6)-dimethyladenosine(1518)/N(6)-dimethyladenosine(1519) in 16S rRNA + 4 S-adenosyl-L-homocysteine + 4 H(+). Specifically dimethylates two adjacent adenosines (A1518 and A1519) in the loop of a conserved hairpin near the 3'-end of 16S rRNA in the 30S particle. May play a critical role in biogenesis of 30S subunits. The protein is Ribosomal RNA small subunit methyltransferase A of Chlorobium phaeobacteroides (strain DSM 266 / SMG 266 / 2430).